Consider the following 321-residue polypeptide: 5,10-methylenetetrahydromethanopterin reductase (321 aa).

The protein belongs to the mer family.

The protein localises to the cytoplasm. The enzyme catalyses 5-methyl-5,6,7,8-tetrahydromethanopterin + oxidized coenzyme F420-(gamma-L-Glu)(n) + H(+) = 5,10-methylenetetrahydromethanopterin + reduced coenzyme F420-(gamma-L-Glu)(n). The protein operates within one-carbon metabolism; methanogenesis from CO(2); methyl-coenzyme M from 5,10-methylene-5,6,7,8-tetrahydromethanopterin: step 1/2. Its function is as follows. Catalyzes the reversible reduction of methylene-H(4)MPT to methyl-H(4)MPT. This chain is 5,10-methylenetetrahydromethanopterin reductase, found in Methanothermobacter thermautotrophicus (strain ATCC 29096 / DSM 1053 / JCM 10044 / NBRC 100330 / Delta H) (Methanobacterium thermoautotrophicum).